Consider the following 141-residue polypeptide: Zinc finger protein 593 homolog (141 aa).

The tract at residues 1–32 (MGRYSGHGGTHTKKKQYKRARSTKNRAKDIDQ) is disordered. Positions 10-25 (THTKKKQYKRARSTKN) are enriched in basic residues. The segment at 60–84 (NYCIHCSKHFVTNEDLQSHIKGKPH) adopts a C2H2-type zinc-finger fold.

Belongs to the ZNF593/BUD20 C2H2-type zinc-finger protein family. In terms of assembly, associates with pre-60S ribosomal particles; released from the pre-60S particle very early in the cytoplasm.

The protein resides in the nucleus. It is found in the cytoplasm. In terms of biological role, involved in pre-60S ribosomal particles maturation by promoting the nuclear export of the 60S ribosome. The chain is Zinc finger protein 593 homolog from Dictyostelium discoideum (Social amoeba).